The sequence spans 322 residues: HPr kinase/phosphorylase (322 aa).

Active-site residues include His153 and Lys174. 168–175 (GRSGLGKS) is an ATP binding site. Ser175 contributes to the Mg(2+) binding site. Asp192 (proton acceptor; for phosphorylation activity. Proton donor; for dephosphorylation activity) is an active-site residue. The tract at residues 217–226 (MEIRGLGVVD) is important for the catalytic mechanism of both phosphorylation and dephosphorylation. Position 218 (Glu218) interacts with Mg(2+). Arg259 is an active-site residue. The tract at residues 280 to 285 (PIFPGK) is important for the catalytic mechanism of dephosphorylation.

The protein belongs to the HPrK/P family. As to quaternary structure, homohexamer. Mg(2+) is required as a cofactor.

It carries out the reaction [HPr protein]-L-serine + ATP = [HPr protein]-O-phospho-L-serine + ADP + H(+). The catalysed reaction is [HPr protein]-O-phospho-L-serine + phosphate + H(+) = [HPr protein]-L-serine + diphosphate. Its function is as follows. Catalyzes the ATP- as well as the pyrophosphate-dependent phosphorylation of a specific serine residue in HPr, a phosphocarrier protein of the phosphoenolpyruvate-dependent sugar phosphotransferase system (PTS). HprK/P also catalyzes the pyrophosphate-producing, inorganic phosphate-dependent dephosphorylation (phosphorolysis) of seryl-phosphorylated HPr (P-Ser-HPr). The polypeptide is HPr kinase/phosphorylase (Chlorobium phaeobacteroides (strain DSM 266 / SMG 266 / 2430)).